Reading from the N-terminus, the 444-residue chain is Tubulin beta-7 chain (444 aa).

8 residues coordinate GTP: Q11, E69, S138, G142, T143, G144, N204, and N226. Mg(2+) is bound at residue E69.

Belongs to the tubulin family. In terms of assembly, dimer of alpha and beta chains. A typical microtubule is a hollow water-filled tube with an outer diameter of 25 nm and an inner diameter of 15 nM. Alpha-beta heterodimers associate head-to-tail to form protofilaments running lengthwise along the microtubule wall with the beta-tubulin subunit facing the microtubule plus end conferring a structural polarity. Microtubules usually have 13 protofilaments but different protofilament numbers can be found in some organisms and specialized cells. Mg(2+) serves as cofactor. Expressed in roots, leaf sheaths, and suspension cultured cells.

The protein resides in the cytoplasm. It localises to the cytoskeleton. Tubulin is the major constituent of microtubules, a cylinder consisting of laterally associated linear protofilaments composed of alpha- and beta-tubulin heterodimers. Microtubules grow by the addition of GTP-tubulin dimers to the microtubule end, where a stabilizing cap forms. Below the cap, tubulin dimers are in GDP-bound state, owing to GTPase activity of alpha-tubulin. The chain is Tubulin beta-7 chain (TUBB7) from Oryza sativa subsp. japonica (Rice).